A 400-amino-acid polypeptide reads, in one-letter code: Dual-specificity RNA methyltransferase RlmN (400 aa).

Glutamate 125 (proton acceptor) is an active-site residue. Positions 131-372 (ETDRGTLCVS…VRTPRGRDIL (242 aa)) constitute a Radical SAM core domain. Residues cysteine 138 and cysteine 375 are joined by a disulfide bond. [4Fe-4S] cluster is bound by residues cysteine 145, cysteine 149, and cysteine 152. S-adenosyl-L-methionine-binding positions include 201–202 (GE), serine 233, 255–257 (SLH), and asparagine 332. Cysteine 375 serves as the catalytic S-methylcysteine intermediate.

Belongs to the radical SAM superfamily. RlmN family. [4Fe-4S] cluster is required as a cofactor.

It localises to the cytoplasm. It carries out the reaction adenosine(2503) in 23S rRNA + 2 reduced [2Fe-2S]-[ferredoxin] + 2 S-adenosyl-L-methionine = 2-methyladenosine(2503) in 23S rRNA + 5'-deoxyadenosine + L-methionine + 2 oxidized [2Fe-2S]-[ferredoxin] + S-adenosyl-L-homocysteine. It catalyses the reaction adenosine(37) in tRNA + 2 reduced [2Fe-2S]-[ferredoxin] + 2 S-adenosyl-L-methionine = 2-methyladenosine(37) in tRNA + 5'-deoxyadenosine + L-methionine + 2 oxidized [2Fe-2S]-[ferredoxin] + S-adenosyl-L-homocysteine. Specifically methylates position 2 of adenine 2503 in 23S rRNA and position 2 of adenine 37 in tRNAs. m2A2503 modification seems to play a crucial role in the proofreading step occurring at the peptidyl transferase center and thus would serve to optimize ribosomal fidelity. The chain is Dual-specificity RNA methyltransferase RlmN from Bradyrhizobium diazoefficiens (strain JCM 10833 / BCRC 13528 / IAM 13628 / NBRC 14792 / USDA 110).